A 343-amino-acid polypeptide reads, in one-letter code: MDKFSQSPPLRDDLVRGSSLNWTKEKENILKGPFNYLESHPGKDIRSQLIAAFNAWLDVPEESLNVIRRVVAMLHTASLLIDDVEDNSQLRRGIPVAHNVFGTAQTINSANYVYFCALKELAILNNPAVIQIYTEELVNLHRGQGMDLFWRDTLTCPSEDDYLEMVGNKTGGLFRLAIKLMCAESPSHNAHPDPFQRNDYVPLVNTIGLLFQILDDYKNLSDTIYTQNKGLCEDLTEGKFSFPIIHAIRADPGNLVLINILKQKTTDDEVKKYAVAYMDRAGSFSYTRKVLRGLTKKALTQVDEVDAGRGRGEQMKTILEKLRVDRNHQRGVLTPAAGGASIA.

Lys-43, Arg-46, and His-75 together coordinate isopentenyl diphosphate. Mg(2+) is bound by residues Asp-82 and Asp-86. Arg-91 lines the dimethylallyl diphosphate pocket. Arg-92 is an isopentenyl diphosphate binding site. Lys-169, Thr-170, and Gln-212 together coordinate dimethylallyl diphosphate. Residue Asp-215 coordinates Mg(2+). Positions 219, 229, and 239 each coordinate dimethylallyl diphosphate.

It belongs to the FPP/GGPP synthase family. It depends on Mg(2+) as a cofactor.

It carries out the reaction isopentenyl diphosphate + dimethylallyl diphosphate = (2E)-geranyl diphosphate + diphosphate. The enzyme catalyses isopentenyl diphosphate + (2E)-geranyl diphosphate = (2E,6E)-farnesyl diphosphate + diphosphate. The catalysed reaction is isopentenyl diphosphate + (2E,6E)-farnesyl diphosphate = (2E,6E,10E)-geranylgeranyl diphosphate + diphosphate. Its function is as follows. Geranylgeranyl pyrophosphate synthase; part of the gene cluster 4 that mediates the biosynthesis of an isoprenoid secondary metabolite. The polypeptide is Geranylgeranyl pyrophosphate synthase 1 (GGS1) (Zymoseptoria tritici (strain CBS 115943 / IPO323) (Speckled leaf blotch fungus)).